The primary structure comprises 310 residues: ADP-L-glycero-D-manno-heptose-6-epimerase (310 aa).

Residues 10–11, 31–32, lysine 38, lysine 53, 75–79, and asparagine 92 each bind NADP(+); these read FI, DN, and EGACS. Tyrosine 140 functions as the Proton acceptor in the catalytic mechanism. Residue lysine 144 participates in NADP(+) binding. Asparagine 169 lines the substrate pocket. Residues valine 170 and lysine 178 each coordinate NADP(+). The Proton acceptor role is filled by lysine 178. Residues serine 180, histidine 187, 201–204, arginine 209, and tyrosine 272 each bind substrate; that span reads FEGS.

It belongs to the NAD(P)-dependent epimerase/dehydratase family. HldD subfamily. As to quaternary structure, homopentamer. It depends on NADP(+) as a cofactor.

It catalyses the reaction ADP-D-glycero-beta-D-manno-heptose = ADP-L-glycero-beta-D-manno-heptose. It participates in nucleotide-sugar biosynthesis; ADP-L-glycero-beta-D-manno-heptose biosynthesis; ADP-L-glycero-beta-D-manno-heptose from D-glycero-beta-D-manno-heptose 7-phosphate: step 4/4. In terms of biological role, catalyzes the interconversion between ADP-D-glycero-beta-D-manno-heptose and ADP-L-glycero-beta-D-manno-heptose via an epimerization at carbon 6 of the heptose. This is ADP-L-glycero-D-manno-heptose-6-epimerase from Salmonella heidelberg (strain SL476).